A 247-amino-acid polypeptide reads, in one-letter code: MNVLSCSTNTLKGLYDISGVEVGQHFYWQIGGFQVHGQVLITSWVVIAILLGSASIAVRNPQTIPNDSQNFFEYVLEFIRDVSKTQIGEEYGPWVPFIGTMFLFIFVSNWSGALLPWKIIELPHGELAAPTNDINTTVALALLTSVAYFYAGLTKKGLSYFSKYIQPTPILLPINILEDFTKPLSLSFRLFGNILADELVVVVLVSLVPLVVPIPVMFLGLFTSGIQALIFATLAAAYIGESMEGHH.

Helical transmembrane passes span 38–58 (QVLITSWVVIAILLGSASIAV), 95–115 (VPFIGTMFLFIFVSNWSGALL), 134–154 (INTTVALALLTSVAYFYAGLT), 199–219 (LVVVVLVSLVPLVVPIPVMFL), and 220–240 (GLFTSGIQALIFATLAAAYIG).

Belongs to the ATPase A chain family. As to quaternary structure, F-type ATPases have 2 components, CF(1) - the catalytic core - and CF(0) - the membrane proton channel. CF(1) has five subunits: alpha(3), beta(3), gamma(1), delta(1), epsilon(1). CF(0) has four main subunits: a, b, b' and c.

It is found in the plastid. It localises to the chloroplast thylakoid membrane. Its function is as follows. Key component of the proton channel; it plays a direct role in the translocation of protons across the membrane. The chain is ATP synthase subunit a, chloroplastic from Eucalyptus globulus subsp. globulus (Tasmanian blue gum).